The chain runs to 517 residues: Putative lipase ATG15 (517 aa).

The Cytoplasmic segment spans residues 1–6; the sequence is MRASTH. The helical; Signal-anchor for type II membrane protein transmembrane segment at 7-27 threads the bilayer; it reads SWLLLVVVLSLSSFTVNAVIL. Topologically, residues 28–517 are lumenal; sequence EGLIPPRSHL…TNWHFTDETL (490 aa). Asparagine 187, asparagine 221, and asparagine 303 each carry an N-linked (GlcNAc...) asparagine glycan. Catalysis depends on serine 319, which acts as the Charge relay system. The disordered stretch occupies residues 466 to 499; it reads GWRWPWHRGDSADDDGDSDEDTDEDDKLAVPKAR. A compositionally biased stretch (acidic residues) spans 477–491; it reads ADDDGDSDEDTDEDD.

This sequence belongs to the AB hydrolase superfamily. Lipase family. Binds to both phosphatidylinositol (PI) and phosphatidylinositol 3,5-bisphosphate (PIP2).

The protein resides in the endosome. Its subcellular location is the multivesicular body membrane. The protein localises to the prevacuolar compartment membrane. The enzyme catalyses a triacylglycerol + H2O = a diacylglycerol + a fatty acid + H(+). Functionally, lipase which is essential for lysis of subvacuolar cytoplasm to vacuole targeted bodies and intravacuolar autophagic bodies. Involved in the lysis of intravacuolar multivesicular body (MVB) vesicles. The intravacuolar membrane disintegration by ATG15 is critical to life span extension. The sequence is that of Putative lipase ATG15 (ATG15) from Mycosarcoma maydis (Corn smut fungus).